The sequence spans 307 residues: Fructokinase (307 aa).

Belongs to the carbohydrate kinase PfkB family.

The enzyme catalyses D-fructose + ATP = D-fructose 6-phosphate + ADP + H(+). Functionally, involved in sucrose metabolism. In Klebsiella pneumoniae, this protein is Fructokinase (scrK).